The sequence spans 123 residues: Ribosome-binding factor A (123 aa).

Belongs to the RbfA family. In terms of assembly, monomer. Binds 30S ribosomal subunits, but not 50S ribosomal subunits or 70S ribosomes.

The protein localises to the cytoplasm. Its function is as follows. One of several proteins that assist in the late maturation steps of the functional core of the 30S ribosomal subunit. Associates with free 30S ribosomal subunits (but not with 30S subunits that are part of 70S ribosomes or polysomes). Required for efficient processing of 16S rRNA. May interact with the 5'-terminal helix region of 16S rRNA. This Dechloromonas aromatica (strain RCB) protein is Ribosome-binding factor A.